Here is a 642-residue protein sequence, read N- to C-terminus: Nucleolar GTP-binding protein 1 (642 aa).

The OBG-type G domain maps to 168 to 340; sequence RTLLICGYPN…VRNKACEKLL (173 aa). Residues 174–181, 220–224, and 288–291 each bind GTP; these read GYPNVGKS, DTPGI, and NKTD. The segment at 585–642 is disordered; the sequence is MDGVADASMRSKADRMAKLHRRERNRQARQGEADRHATASLPKHLFSGKRGIGSNDRR. Over residues 609-621 the composition is skewed to basic and acidic residues; sequence NRQARQGEADRHA.

The protein belongs to the TRAFAC class OBG-HflX-like GTPase superfamily. OBG GTPase family. NOG subfamily.

The protein localises to the nucleus. Its subcellular location is the nucleolus. Involved in the biogenesis of the 60S ribosomal subunit. This chain is Nucleolar GTP-binding protein 1 (NOG1), found in Eremothecium gossypii (strain ATCC 10895 / CBS 109.51 / FGSC 9923 / NRRL Y-1056) (Yeast).